The chain runs to 955 residues: Glycine dehydrogenase (decarboxylating) (955 aa).

An N6-(pyridoxal phosphate)lysine modification is found at Lys705.

It belongs to the GcvP family. As to quaternary structure, the glycine cleavage system is composed of four proteins: P, T, L and H. The cofactor is pyridoxal 5'-phosphate.

It carries out the reaction N(6)-[(R)-lipoyl]-L-lysyl-[glycine-cleavage complex H protein] + glycine + H(+) = N(6)-[(R)-S(8)-aminomethyldihydrolipoyl]-L-lysyl-[glycine-cleavage complex H protein] + CO2. Functionally, the glycine cleavage system catalyzes the degradation of glycine. The P protein binds the alpha-amino group of glycine through its pyridoxal phosphate cofactor; CO(2) is released and the remaining methylamine moiety is then transferred to the lipoamide cofactor of the H protein. This chain is Glycine dehydrogenase (decarboxylating), found in Aliivibrio salmonicida (strain LFI1238) (Vibrio salmonicida (strain LFI1238)).